Reading from the N-terminus, the 119-residue chain is Large ribosomal subunit protein uL18 (119 aa).

It belongs to the universal ribosomal protein uL18 family. In terms of assembly, part of the 50S ribosomal subunit; part of the 5S rRNA/L5/L18/L25 subcomplex. Contacts the 5S and 23S rRNAs.

Functionally, this is one of the proteins that bind and probably mediate the attachment of the 5S RNA into the large ribosomal subunit, where it forms part of the central protuberance. This is Large ribosomal subunit protein uL18 from Endomicrobium trichonymphae.